The primary structure comprises 350 residues: fMet-Leu-Phe receptor (350 aa).

At 1-27 (METNSSLPTNISGGTPAVSAGYLFLDI) the chain is on the extracellular side. N-linked (GlcNAc...) asparagine glycosylation is found at Asn-4 and Asn-10. Residues 28-50 (ITYLVFAVTFVLGVLGNGLVIWV) traverse the membrane as a helical segment. The Cytoplasmic segment spans residues 51 to 61 (AGFRMTHTVTT). The helical transmembrane segment at 62–83 (ISYLNLAVADFCFTSTLPFFMV) threads the bilayer. Over 84–100 (RKAMGGHWPFGWFLCKF) the chain is Extracellular. A disulfide bond links Cys-98 and Cys-176. A helical transmembrane segment spans residues 101-121 (VFTIVDINLFGSVFLIALIAL). At 122 to 140 (DRCVCVLHPVWTQNHRTVS) the chain is on the cytoplasmic side. The chain crosses the membrane as a helical span at residues 141-162 (LAKKVIIGPWVMALLLTLPVII). The Extracellular segment spans residues 163 to 205 (RVTTVPGKTGTVACTFNFSPWTNDPKERINVAVAMLTVRGIIR). Residues 206 to 226 (FIIGFSAPMSIVAVSYGLIAT) form a helical membrane-spanning segment. Residues 227 to 242 (KIHKQGLIKSSRPLRV) are Cytoplasmic-facing. A helical membrane pass occupies residues 243–266 (LSFVAAAFFLCWSPYQVVALIATV). Residues 267–285 (RIRELLQGMYKEIGIAVDV) lie on the Extracellular side of the membrane. Residues 286–305 (TSALAFFNSCLNPMLYVFMG) traverse the membrane as a helical segment. Residues 306–350 (QDFRERLIHALPASLERALTEDSTQTSDTATNSTLPSAEVELQAK) lie on the Cytoplasmic side of the membrane. The tract at residues 325–350 (TEDSTQTSDTATNSTLPSAEVELQAK) is disordered. Residues 326-341 (EDSTQTSDTATNSTLP) are compositionally biased toward polar residues. The residue at position 328 (Ser-328) is a Phosphoserine. Phosphothreonine occurs at positions 329 and 331. Position 332 is a phosphoserine (Ser-332). A phosphothreonine mark is found at Thr-334 and Thr-336. Ser-338 is modified (phosphoserine). Position 339 is a phosphothreonine (Thr-339).

It belongs to the G-protein coupled receptor 1 family. Interacts with S.aureus chemotaxis inhibitory protein (CHIPS); the interaction blocks the receptor and may thus inhibit the immune response. Post-translationally, phosphorylated; which is necessary for desensitization. In terms of tissue distribution, neutrophils.

It is found in the cell membrane. In terms of biological role, high affinity receptor for N-formyl-methionyl peptides (fMLP), which are powerful neutrophil chemotactic factors. Binding of fMLP to the receptor stimulates intracellular calcium mobilization and superoxide anion release. This response is mediated via a G-protein that activates a phosphatidylinositol-calcium second messenger system. Receptor for TAFA4, mediates its effects on chemoattracting macrophages, promoting phagocytosis and increasing ROS release. Receptor for cathepsin CTSG, leading to increased phagocyte chemotaxis. This is fMet-Leu-Phe receptor (FPR1) from Homo sapiens (Human).